A 490-amino-acid chain; its full sequence is 23S rRNA (uracil(1939)-C(5))-methyltransferase RlmD (490 aa).

Positions 14 to 75 constitute a TRAM domain; it reads APAPAEYPID…SSFEKATLTA (62 aa). [4Fe-4S] cluster is bound by residues C88, C98, C101, and C180. S-adenosyl-L-methionine-binding residues include Q289, F318, N323, E339, N374, and D395. C446 acts as the Nucleophile in catalysis.

The protein belongs to the class I-like SAM-binding methyltransferase superfamily. RNA M5U methyltransferase family. RlmD subfamily.

It catalyses the reaction uridine(1939) in 23S rRNA + S-adenosyl-L-methionine = 5-methyluridine(1939) in 23S rRNA + S-adenosyl-L-homocysteine + H(+). Functionally, catalyzes the formation of 5-methyl-uridine at position 1939 (m5U1939) in 23S rRNA. In Polaromonas naphthalenivorans (strain CJ2), this protein is 23S rRNA (uracil(1939)-C(5))-methyltransferase RlmD.